We begin with the raw amino-acid sequence, 136 residues long: Small ribosomal subunit protein uS9 (136 aa).

The protein belongs to the universal ribosomal protein uS9 family.

The polypeptide is Small ribosomal subunit protein uS9 (Borrelia duttonii (strain Ly)).